A 177-amino-acid chain; its full sequence is Isopentenyl-diphosphate Delta-isomerase (177 aa).

Mn(2+)-binding residues include H22 and H28. The region spanning 26–160 is the Nudix hydrolase domain; it reads LRHKAISVFV…PERFTPWLRI (135 aa). C62 is a catalytic residue. Position 64 (H64) interacts with Mn(2+). A Mg(2+)-binding site is contributed by E82. E108 and E110 together coordinate Mn(2+). The active site involves E110.

This sequence belongs to the IPP isomerase type 1 family. Mg(2+) serves as cofactor. The cofactor is Mn(2+).

Its subcellular location is the cytoplasm. It carries out the reaction isopentenyl diphosphate = dimethylallyl diphosphate. It participates in isoprenoid biosynthesis; dimethylallyl diphosphate biosynthesis; dimethylallyl diphosphate from isopentenyl diphosphate: step 1/1. The protein operates within porphyrin-containing compound metabolism; chlorophyll biosynthesis. Its function is as follows. Catalyzes the 1,3-allylic rearrangement of the homoallylic substrate isopentenyl (IPP) to its highly electrophilic allylic isomer, dimethylallyl diphosphate (DMAPP). This Cereibacter sphaeroides (strain ATCC 17025 / ATH 2.4.3) (Rhodobacter sphaeroides) protein is Isopentenyl-diphosphate Delta-isomerase.